The sequence spans 356 residues: ADP-ribosylhydrolase ARH3 (356 aa).

D26, E33, T62, D63, and D64 together coordinate Mg(2+). D63 contributes to the substrate binding site. Substrate-binding positions include K132–G138, H168, and I260. Residues D303, D305, and T306 each coordinate Mg(2+).

Belongs to the ADP-ribosylglycohydrolase family. As to quaternary structure, monomer. Requires Mg(2+) as cofactor. The cofactor is Mn(2+).

It is found in the nucleus. It localises to the cytoplasm. Its subcellular location is the chromosome. The protein localises to the mitochondrion matrix. It carries out the reaction [(1''-&gt;2')-ADP-alpha-D-ribose](n) + H2O = [(1''-&gt;2')-ADP-alpha-D-ribose](n-1) + ADP-D-ribose. It catalyses the reaction 1''-O-acetyl-ADP-alpha-D-ribose + H2O = ADP-D-ribose + acetate + H(+). The catalysed reaction is O-(ADP-D-ribosyl)-L-seryl-[protein] + H2O = ADP-D-ribose + L-seryl-[protein]. The enzyme catalyses alpha-NAD(+) + H2O = ADP-D-ribose + nicotinamide + H(+). Its activity is regulated as follows. The protein undergoes a dramatic conformational switch from closed to open states upon substrate-binding, which enables specific substrate recognition for the 1''-O-linkage. The glutamate flap (Glu-33) blocks substrate entrance to Mg(2+) in the unliganded closed state. In presence of substrate, Glu-33 is ejected from the active site: this closed-to-open transition significantly widens the substrate-binding channel and precisely positions the scissile 1''-O-linkage for cleavage while securing tightly 2'- and 3'-hydroxyls of ADP-ribose. Activity is inhibited by calcium. ADP-ribosylhydrolase that preferentially hydrolyzes the scissile alpha-O-linkage attached to the anomeric C1'' position of ADP-ribose and acts on different substrates, such as proteins ADP-ribosylated on serine and threonine, free poly(ADP-ribose) and O-acetyl-ADP-D-ribose. Specifically acts as a serine mono-ADP-ribosylhydrolase by mediating the removal of mono-ADP-ribose attached to serine residues on proteins, thereby playing a key role in DNA damage response. Serine ADP-ribosylation of proteins constitutes the primary form of ADP-ribosylation of proteins in response to DNA damage. Does not hydrolyze ADP-ribosyl-arginine, -cysteine, -diphthamide, or -asparagine bonds. Also able to degrade protein free poly(ADP-ribose), which is synthesized in response to DNA damage: free poly(ADP-ribose) acts as a potent cell death signal and its degradation by ADPRHL2 protects cells from poly(ADP-ribose)-dependent cell death, a process named parthanatos. Also hydrolyzes free poly(ADP-ribose) in mitochondria. Specifically digests O-acetyl-ADP-D-ribose, a product of deacetylation reactions catalyzed by sirtuins. Specifically degrades 1''-O-acetyl-ADP-D-ribose isomer, rather than 2''-O-acetyl-ADP-D-ribose or 3''-O-acetyl-ADP-D-ribose isomers. The polypeptide is ADP-ribosylhydrolase ARH3 (adprs) (Latimeria chalumnae (Coelacanth)).